A 541-amino-acid polypeptide reads, in one-letter code: Cyclin-T1-4 (541 aa).

Residues valine 277–glycine 366 form a disordered region. A compositionally biased stretch (polar residues) spans serine 307 to glycine 325. Residues glutamine 336–proline 354 show a composition bias toward basic and acidic residues. A Phosphoserine modification is found at serine 396. Residues glutamate 445 to arginine 541 are disordered. Residues methionine 493–serine 511 show a composition bias toward basic and acidic residues. Residues lysine 519–serine 528 show a composition bias toward polar residues. Residues tyrosine 529–arginine 541 are compositionally biased toward basic and acidic residues.

This sequence belongs to the cyclin family. Cyclin T subfamily.

The sequence is that of Cyclin-T1-4 (CYCT1-4) from Arabidopsis thaliana (Mouse-ear cress).